The following is a 189-amino-acid chain: Copper transport protein CTR2 (189 aa).

Over 1–81 the chain is Cytoplasmic; that stretch reads MDDKKTWSTV…VVFEWWHIKT (81 aa). Residues 82 to 102 form a helical membrane-spanning segment; sequence LPGLILSCLAIFGLAYLYEYL. Residues 103–142 lie on the Vacuolar side of the membrane; the sequence is KYCVHKRQLSQRVLLPNRSLTKINQADKVSNSILYGLQVG. The chain crosses the membrane as a helical span at residues 143 to 163; that stretch reads FSFMLMLVFMTYNGWLMLAVV. At 164–189 the chain is on the cytoplasmic side; sequence CGAIWGNYSWCTSYSPEIDDSSLACH.

It belongs to the copper transporter (Ctr) (TC 1.A.56) family. SLC31A subfamily. Homomultimer.

Its subcellular location is the vacuole membrane. Functionally, provides bioavailable copper via mobilization of vacuolar copper stores and export to the cytoplasm. In Saccharomyces cerevisiae (strain ATCC 204508 / S288c) (Baker's yeast), this protein is Copper transport protein CTR2 (CTR2).